The chain runs to 432 residues: Enolase (432 aa).

A (2R)-2-phosphoglycerate-binding site is contributed by glutamine 163. The active-site Proton donor is the glutamate 205. Residues aspartate 242, glutamate 288, and aspartate 315 each coordinate Mg(2+). Residues lysine 340, arginine 369, serine 370, and lysine 391 each coordinate (2R)-2-phosphoglycerate. Residue lysine 340 is the Proton acceptor of the active site.

It belongs to the enolase family. In terms of assembly, homodimer. It depends on Mg(2+) as a cofactor.

The protein resides in the cytoplasm. Its subcellular location is the secreted. The protein localises to the cell surface. It carries out the reaction (2R)-2-phosphoglycerate = phosphoenolpyruvate + H2O. The protein operates within carbohydrate degradation; glycolysis; pyruvate from D-glyceraldehyde 3-phosphate: step 4/5. Its activity is regulated as follows. The covalent binding to the substrate causes inactivation of the enzyme, and possibly serves as a signal for the export of the protein. In terms of biological role, catalyzes the reversible conversion of 2-phosphoglycerate (2-PG) into phosphoenolpyruvate (PEP). It is essential for the degradation of carbohydrates via glycolysis. In Enterococcus hirae, this protein is Enolase.